Consider the following 100-residue polypeptide: Urease subunit gamma (100 aa).

The protein belongs to the urease gamma subunit family. In terms of assembly, heterotrimer of UreA (gamma), UreB (beta) and UreC (alpha) subunits. Three heterotrimers associate to form the active enzyme.

Its subcellular location is the cytoplasm. The catalysed reaction is urea + 2 H2O + H(+) = hydrogencarbonate + 2 NH4(+). It functions in the pathway nitrogen metabolism; urea degradation; CO(2) and NH(3) from urea (urease route): step 1/1. This chain is Urease subunit gamma, found in Pseudomonas syringae pv. tomato (strain ATCC BAA-871 / DC3000).